The following is a 524-amino-acid chain: Na(+)/H(+) antiporter NhaB (524 aa).

Transmembrane regions (helical) follow at residues 13 to 33 (FLGN…IINP), 98 to 118 (LLLV…LFVF), 140 to 160 (AFLS…SVSV), 239 to 259 (FFIR…LVCL), 304 to 324 (AIIG…VGLV), 325 to 345 (GLSV…HSLG), 358 to 378 (LTVF…TPII), 448 to 468 (ATPN…APLI), and 479 to 499 (ALPY…FLLV).

The protein belongs to the NhaB Na(+)/H(+) (TC 2.A.34) antiporter family.

The protein localises to the cell inner membrane. The catalysed reaction is 2 Na(+)(in) + 3 H(+)(out) = 2 Na(+)(out) + 3 H(+)(in). Its function is as follows. Na(+)/H(+) antiporter that extrudes sodium in exchange for external protons. The sequence is that of Na(+)/H(+) antiporter NhaB from Yersinia pestis (strain Pestoides F).